We begin with the raw amino-acid sequence, 360 residues long: DNA integrity scanning protein DisA (360 aa).

Residues glutamate 11–isoleucine 149 enclose the DAC domain. Residues glycine 78, leucine 96, and methionine 109–threonine 113 contribute to the ATP site.

Belongs to the DisA family. In terms of assembly, homooligomer. Interacts with RadA. Mg(2+) is required as a cofactor.

It is found in the cytoplasm. The catalysed reaction is 2 ATP = 3',3'-c-di-AMP + 2 diphosphate. Its activity is regulated as follows. Diadenylate cyclase (DAC) activity is inhibited 2-fold by Holliday junction (HJ) DNA, further addition of RecG inhibits DAC activity 11-fold; RecG may relocate DisA from the HJ. DAC is inhibited by the interaction with RadA. Diadenylate cyclase activity is not affected by ssDNA or dsDNA, but three- and four-way junctions strongly inhibit the activity of DisA, suggesting the enzyme is regulated by branched nucleic acids. Participates in a DNA-damage check-point that is active prior to asymmetric division when DNA is damaged. Forms globular foci that rapidly scan along the chromosomes during sporulation, searching for lesions. Its ability to scan through the chromosome rapidly is due to its non-specific DNA-binding. When a lesion is present, DisA pauses at the lesion site. This triggers a cellular response that culminates in a temporary block in sporulation initiation. It is required, at least partially, to inhibit the activity of the transcription factor spo0A, which controls, among others, early sporulation genes. In B.subtilis c-di-AMP is a second messenger that mediates growth, DNA repair and cell wall homeostasis; it is toxic when present in excess. Limits the replication fork reggression activity of RecG; DisA inhibits the ATPase activity of RecG. By limiting RecG-mediated fork regression, DisA provides time for removal of potentially lethal DNA lesions. Its function is as follows. One of 3 paralogous diadenylate cyclases (DAC) in this bacteria. Has diadenylate cyclase activity, catalyzing the condensation of 2 ATP molecules into cyclic di-AMP (c-di-AMP). c-di-AMP acts as a signaling molecule that couples DNA integrity with progression of sporulation. The rise in c-di-AMP level generated by DisA while scanning the chromosome operates as a positive signal that advances sporulation; upon encountering a lesion, the DisA focus arrests at the damaged site and halts c-di-AMP synthesis. Does not convert GTP to c-di-GMP. The protein is DNA integrity scanning protein DisA of Bacillus subtilis (strain 168).